Consider the following 161-residue polypeptide: ATP synthase subunit b 1 (161 aa).

The helical transmembrane segment at 5 to 25 (AETWVAVAFVLMVALFIYFGA) threads the bilayer.

Belongs to the ATPase B chain family. F-type ATPases have 2 components, F(1) - the catalytic core - and F(0) - the membrane proton channel. F(1) has five subunits: alpha(3), beta(3), gamma(1), delta(1), epsilon(1). F(0) has three main subunits: a(1), b(2) and c(10-14). The alpha and beta chains form an alternating ring which encloses part of the gamma chain. F(1) is attached to F(0) by a central stalk formed by the gamma and epsilon chains, while a peripheral stalk is formed by the delta and b chains.

Its subcellular location is the cell inner membrane. F(1)F(0) ATP synthase produces ATP from ADP in the presence of a proton or sodium gradient. F-type ATPases consist of two structural domains, F(1) containing the extramembraneous catalytic core and F(0) containing the membrane proton channel, linked together by a central stalk and a peripheral stalk. During catalysis, ATP synthesis in the catalytic domain of F(1) is coupled via a rotary mechanism of the central stalk subunits to proton translocation. In terms of biological role, component of the F(0) channel, it forms part of the peripheral stalk, linking F(1) to F(0). This chain is ATP synthase subunit b 1, found in Afipia carboxidovorans (strain ATCC 49405 / DSM 1227 / KCTC 32145 / OM5) (Oligotropha carboxidovorans).